The chain runs to 262 residues: Cytochrome c oxidase subunit 3 (262 aa).

The next 6 membrane-spanning stretches (helical) occupy residues 39-59, 83-103, 120-140, 163-183, 201-221, and 240-260; these read YTMT…YQWW, GMIL…WAFF, VGIA…ILLA, GLFF…YEYI, ATGF…ICFL, and AWYW…IYWW.

It belongs to the cytochrome c oxidase subunit 3 family. Component of the cytochrome c oxidase (complex IV, CIV), a multisubunit enzyme composed of a catalytic core of 3 subunits and several supernumerary subunits. The complex exists as a monomer or a dimer and forms supercomplexes (SCs) in the inner mitochondrial membrane with ubiquinol-cytochrome c oxidoreductase (cytochrome b-c1 complex, complex III, CIII).

It localises to the mitochondrion inner membrane. It catalyses the reaction 4 Fe(II)-[cytochrome c] + O2 + 8 H(+)(in) = 4 Fe(III)-[cytochrome c] + 2 H2O + 4 H(+)(out). Functionally, component of the cytochrome c oxidase, the last enzyme in the mitochondrial electron transport chain which drives oxidative phosphorylation. The respiratory chain contains 3 multisubunit complexes succinate dehydrogenase (complex II, CII), ubiquinol-cytochrome c oxidoreductase (cytochrome b-c1 complex, complex III, CIII) and cytochrome c oxidase (complex IV, CIV), that cooperate to transfer electrons derived from NADH and succinate to molecular oxygen, creating an electrochemical gradient over the inner membrane that drives transmembrane transport and the ATP synthase. Cytochrome c oxidase is the component of the respiratory chain that catalyzes the reduction of oxygen to water. Electrons originating from reduced cytochrome c in the intermembrane space (IMS) are transferred via the dinuclear copper A center (CU(A)) of subunit 2 and heme A of subunit 1 to the active site in subunit 1, a binuclear center (BNC) formed by heme A3 and copper B (CU(B)). The BNC reduces molecular oxygen to 2 water molecules using 4 electrons from cytochrome c in the IMS and 4 protons from the mitochondrial matrix. The polypeptide is Cytochrome c oxidase subunit 3 (COIII) (Anopheles gambiae (African malaria mosquito)).